Consider the following 1132-residue polypeptide: MSVKASGGSSVARPQLYQTLAVATITQAEQQDRFLGRGELDELASYFASGAKRLEIAQLLTENSEIIVSRAANRIFVGGSPMAFLEKPREPELAMAAVGGGGDVRESMKLGTVTYVETRGGFLENLRSIFNTSPSGPTPPGFRPINIARYGPSNMAKSLRDLSWFLRYATYAIVAGDPNIIVVNTRGLREIIENACSGEATIVALQEIKAASLSYFRKDPEAAEIVSQYMDVLITEFKAPTPSNKLRQRPSGDQQGLQLPQIYFSAAERRPKFVMKTGLSATEKNEVIKAAYRQIFERDITRAYSLSISDLESKVKNGDISMKEFVRRLAKSPLYQKQFYQPFINSRVIELAFRHILGRGPSSREEVQKYFSIISNGGLPALVDALVDSAEYSDYFGEETVPYLRGLGQEAQECRNWGPQQDLFNYSAPFRKVPQFITTFAAYDRPLPDQHPYGSGNDPLEIQFGAIFPKETRNPSTSPAPFGKDTRRILIHQGPGINNQVSNPSARGLAPGSLGPKVFKLDQLPGTIGKKAAKGASVKFSESSTQAVIKATYLQVFGRDVYEGQRLKVQEIKLENGEISVRDFVRALAKSDLFRKLYWTPFYVCKAIEYIHRRLLGRPTYGRQENNKYFDIASKKGLYAVVDAILDSLEYTETFGEDTVPYERYLTPAGVALRQLRVGTIREDVANVEKQETPRFVELGTVKENRTQPDIDFRINQGVTKQREQTKVFKRVAGIKDKAAIKTLISAAYRQIFERDIAPYIAQNEFSGWESKLGNGEITVKEFIEGLGYSNLYLKEFYTPYPNTKVIELGTKHFLGRAPIDQAEIRKYNQILATQGIRAFINALVNSQEYNEVFGEDTVPYRRFPTLPAANFPNTQKLYNQLTKQNNDVVIPSFKPVQARIQSDKTPILAKAIADLAAQAKQMDKSKPLFIELGRSYNDGRGQSVEVGVGTTRRKPARIYRLTNGIGQAEKQLVINAIYRQVLDVFSGQVPDYYRRTELDSKLRNGEISVREFVREIASSEIYRKRFYTPYPNTKVIEFLFRHLLGRAPATQGEIRQYNKLLADNGLRAAVEAIVDSPEYSRYFGEDVVPYPRFPSLPAGNYLGSVQAAADLVKQSWSSLSPSTLTGRPGDR.

Cys-196 is a (2R,3E)-phycocyanobilin binding site. PBS-linker domains lie at 253–433 (DQQG…FRKV), 514–692 (LGPK…EKQE), 709–887 (PDID…KQNN), and 940–1121 (GRGQ…SSLS).

This sequence belongs to the phycobilisome linker protein family. In terms of assembly, heterodimer of ApcF (a variant beta-allophycocyanin). Phycobilisomes of this organism are composed of a two cylinder core, from which six rods radiate. The core is mainly composed of allophycocyanin alpha and beta chains and of minor components. In terms of processing, contains one covalently linked bilin chromophore. This protein autochromophorylates.

The protein resides in the cellular thylakoid membrane. This protein is postulated to act both as terminal energy acceptor (by its phycobilin-like domains) and as a linker polypeptide (by its repeats and arms) that stabilizes the phycobilisome core architecture. Has intrinsic bilin lyase activity. This chain is Phycobiliprotein ApcE (apcE), found in Nostoc sp. (strain PCC 7120 / SAG 25.82 / UTEX 2576).